Reading from the N-terminus, the 482-residue chain is UDP-N-acetylmuramate--L-alanine ligase (482 aa).

An ATP-binding site is contributed by 122–128 (GTHGKTT).

It belongs to the MurCDEF family.

It localises to the cytoplasm. It catalyses the reaction UDP-N-acetyl-alpha-D-muramate + L-alanine + ATP = UDP-N-acetyl-alpha-D-muramoyl-L-alanine + ADP + phosphate + H(+). It participates in cell wall biogenesis; peptidoglycan biosynthesis. Cell wall formation. In Mycolicibacterium smegmatis (strain ATCC 700084 / mc(2)155) (Mycobacterium smegmatis), this protein is UDP-N-acetylmuramate--L-alanine ligase.